A 181-amino-acid polypeptide reads, in one-letter code: Probable calcium-binding protein CML43 (181 aa).

EF-hand domains lie at 24–59 (LNALRLHRVFDLFDKNNDGFITVEELSQALSRLGLD), 107–142 (SPESDLEEAFNVFDEDGDGFISAVELQKVLKKLGLP), and 145–180 (GEIEQVEKMIVSVDSNHDGRVDFFEFKNMMQTVVVP). Residues Asp37, Asn39, Asp41, Glu48, Asp120, Asp122, Asp124, Glu131, Asp158, Asn160, Asp162, Arg164, and Glu169 each coordinate Ca(2+).

In terms of tissue distribution, expressed specifically in roots.

Calcium-binding protein that may mediate calcium-dependent signal during plant defense response. In Arabidopsis thaliana (Mouse-ear cress), this protein is Probable calcium-binding protein CML43 (CML43).